The chain runs to 98 residues: Beta-elicitin DRE-beta (98 aa).

Disulfide bonds link C3–C71, C27–C56, and C51–C95.

It belongs to the elicitin family.

The protein localises to the secreted. Functionally, induces local and distal defense responses (incompatible hypersensitive reaction) in plants from the solanaceae and cruciferae families. Elicits leaf necrosis and causes the accumulation of pathogenesis-related proteins. Might interact with the lipidic molecules of the plasma membrane. The polypeptide is Beta-elicitin DRE-beta (Phytophthora drechsleri).